Here is a 172-residue protein sequence, read N- to C-terminus: Protein-export protein SecB (172 aa).

The interval 153 to 172 (AQGQGGDSGIVMPDGSQARH) is disordered.

The protein belongs to the SecB family. In terms of assembly, homotetramer, a dimer of dimers. One homotetramer interacts with 1 SecA dimer.

It is found in the cytoplasm. Its function is as follows. One of the proteins required for the normal export of preproteins out of the cell cytoplasm. It is a molecular chaperone that binds to a subset of precursor proteins, maintaining them in a translocation-competent state. It also specifically binds to its receptor SecA. This Cupriavidus metallidurans (strain ATCC 43123 / DSM 2839 / NBRC 102507 / CH34) (Ralstonia metallidurans) protein is Protein-export protein SecB.